A 79-amino-acid polypeptide reads, in one-letter code: D-alanyl carrier protein (79 aa).

Positions 1-77 (MDTKQGVLDI…KIVAKVESLE (77 aa)) constitute a Carrier domain. An O-(pantetheine 4'-phosphoryl)serine modification is found at Ser-35.

The protein belongs to the DltC family. 4'-phosphopantetheine is transferred from CoA to a specific serine of apo-DCP.

It is found in the cytoplasm. It functions in the pathway cell wall biogenesis; lipoteichoic acid biosynthesis. In terms of biological role, carrier protein involved in the D-alanylation of lipoteichoic acid (LTA). The loading of thioester-linked D-alanine onto DltC is catalyzed by D-alanine--D-alanyl carrier protein ligase DltA. The DltC-carried D-alanyl group is further transferred to cell membrane phosphatidylglycerol (PG) by forming an ester bond, probably catalyzed by DltD. D-alanylation of LTA plays an important role in modulating the properties of the cell wall in Gram-positive bacteria, influencing the net charge of the cell wall. The polypeptide is D-alanyl carrier protein (Lactobacillus helveticus (strain DPC 4571)).